The sequence spans 444 residues: Elongation factor 1-alpha (444 aa).

Residues 15-236 form the tr-type G domain; that stretch reads KPHLNLAVIG…ALDTFQPPPR (222 aa). The tract at residues 24–31 is G1; the sequence is GHVDNGKS. Position 24 to 31 (24 to 31) interacts with GTP; that stretch reads GHVDNGKS. Ser-31 serves as a coordination point for Mg(2+). The segment at 80-84 is G2; it reads GVTIE. A G3 region spans residues 101–104; it reads DLPG. Residues 101-105 and 163-166 each bind GTP; these read DLPGH and NKMD. The G4 stretch occupies residues 163 to 166; it reads NKMD. The G5 stretch occupies residues 202–204; the sequence is SAI.

Belongs to the TRAFAC class translation factor GTPase superfamily. Classic translation factor GTPase family. EF-Tu/EF-1A subfamily.

It is found in the cytoplasm. The catalysed reaction is GTP + H2O = GDP + phosphate + H(+). Functionally, GTP hydrolase that promotes the GTP-dependent binding of aminoacyl-tRNA to the A-site of ribosomes during protein biosynthesis. The chain is Elongation factor 1-alpha from Pyrobaculum islandicum (strain DSM 4184 / JCM 9189 / GEO3).